We begin with the raw amino-acid sequence, 329 residues long: RNA-binding protein CP33, chloroplastic (329 aa).

The N-terminal 69 residues, 1–69 (MSSAYCSSAV…NIRRHRFFCA (69 aa)), are a transit peptide targeting the chloroplast. The segment covering 77–104 (ADDEIQASVEEEEEVEEEGDEGEEEVEE) has biased composition (acidic residues). Disordered stretches follow at residues 77 to 117 (ADDE…EEGR) and 296 to 329 (SERE…NVSA). 2 RRM domains span residues 116-194 (GRLY…FPEV) and 219-297 (HKVY…LASE).

Its subcellular location is the plastid. The protein localises to the chloroplast. In terms of biological role, could be involved in splicing and/or processing of chloroplast RNAs. The sequence is that of RNA-binding protein CP33, chloroplastic from Arabidopsis thaliana (Mouse-ear cress).